The sequence spans 170 residues: Shikimate kinase (170 aa).

11–16 contacts ATP; the sequence is LSGKST. Serine 15 is a Mg(2+) binding site. Residues aspartate 33, arginine 57, and glycine 79 each contribute to the substrate site. Arginine 119 lines the ATP pocket. Arginine 137 lines the substrate pocket.

It belongs to the shikimate kinase family. In terms of assembly, monomer. The cofactor is Mg(2+).

The protein resides in the cytoplasm. It catalyses the reaction shikimate + ATP = 3-phosphoshikimate + ADP + H(+). It functions in the pathway metabolic intermediate biosynthesis; chorismate biosynthesis; chorismate from D-erythrose 4-phosphate and phosphoenolpyruvate: step 5/7. Catalyzes the specific phosphorylation of the 3-hydroxyl group of shikimic acid using ATP as a cosubstrate. This Clostridium botulinum (strain Okra / Type B1) protein is Shikimate kinase.